The sequence spans 434 residues: 3-phosphoshikimate 1-carboxyvinyltransferase (434 aa).

3-phosphoshikimate-binding residues include lysine 22, serine 23, and arginine 27. Lysine 22 contributes to the phosphoenolpyruvate binding site. Phosphoenolpyruvate contacts are provided by glycine 93 and arginine 121. 6 residues coordinate 3-phosphoshikimate: serine 168, serine 169, glutamine 170, serine 199, aspartate 320, and lysine 347. Glutamine 170 serves as a coordination point for phosphoenolpyruvate. The active-site Proton acceptor is aspartate 320. Positions 351, 394, and 419 each coordinate phosphoenolpyruvate.

It belongs to the EPSP synthase family. As to quaternary structure, monomer.

Its subcellular location is the cytoplasm. The enzyme catalyses 3-phosphoshikimate + phosphoenolpyruvate = 5-O-(1-carboxyvinyl)-3-phosphoshikimate + phosphate. It participates in metabolic intermediate biosynthesis; chorismate biosynthesis; chorismate from D-erythrose 4-phosphate and phosphoenolpyruvate: step 6/7. Functionally, catalyzes the transfer of the enolpyruvyl moiety of phosphoenolpyruvate (PEP) to the 5-hydroxyl of shikimate-3-phosphate (S3P) to produce enolpyruvyl shikimate-3-phosphate and inorganic phosphate. This is 3-phosphoshikimate 1-carboxyvinyltransferase from Burkholderia ambifaria (strain ATCC BAA-244 / DSM 16087 / CCUG 44356 / LMG 19182 / AMMD) (Burkholderia cepacia (strain AMMD)).